The sequence spans 195 residues: Putative archaetidylserine decarboxylase proenzyme (195 aa).

Ser-159 functions as the Schiff-base intermediate with substrate; via pyruvic acid in the catalytic mechanism. Ser-159 carries the post-translational modification Pyruvic acid (Ser); by autocatalysis.

Belongs to the phosphatidylserine decarboxylase family. PSD-A subfamily. As to quaternary structure, heterodimer of a large membrane-associated beta subunit and a small pyruvoyl-containing alpha subunit. The cofactor is pyruvate. Is synthesized initially as an inactive proenzyme. Formation of the active enzyme involves a self-maturation process in which the active site pyruvoyl group is generated from an internal serine residue via an autocatalytic post-translational modification. Two non-identical subunits are generated from the proenzyme in this reaction, and the pyruvate is formed at the N-terminus of the alpha chain, which is derived from the carboxyl end of the proenzyme. The autoendoproteolytic cleavage occurs by a canonical serine protease mechanism, in which the side chain hydroxyl group of the serine supplies its oxygen atom to form the C-terminus of the beta chain, while the remainder of the serine residue undergoes an oxidative deamination to produce ammonia and the pyruvoyl prosthetic group on the alpha chain. During this reaction, the Ser that is part of the protease active site of the proenzyme becomes the pyruvoyl prosthetic group, which constitutes an essential element of the active site of the mature decarboxylase. Post-translationally, is synthesized initially as an inactive proenzyme. Formation of the active enzyme involves a self-maturation process in which the active site pyruvoyl group is generated from an internal serine residue via an autocatalytic post-translational modification. Two non-identical subunits are generated from the proenzyme in this reaction, and the pyruvate is formed at the N-terminus of the alpha chain, which is derived from the carboxyl end of the proenzyme. The post-translation cleavage follows an unusual pathway, termed non-hydrolytic serinolysis, in which the side chain hydroxyl group of the serine supplies its oxygen atom to form the C-terminus of the beta chain, while the remainder of the serine residue undergoes an oxidative deamination to produce ammonia and the pyruvoyl prosthetic group on the alpha chain.

The protein localises to the cell membrane. It catalyses the reaction archaetidylserine + H(+) = archaetidylethanolamine + CO2. Its function is as follows. Catalyzes the formation of archaetidylethanolamine (PtdEtn) from archaetidylserine (PtdSer). In Archaeoglobus fulgidus (strain ATCC 49558 / DSM 4304 / JCM 9628 / NBRC 100126 / VC-16), this protein is Putative archaetidylserine decarboxylase proenzyme.